The following is a 300-amino-acid chain: Dihydroorotate dehydrogenase B (NAD(+)), catalytic subunit (300 aa).

Residues Ser-20 and 44–45 contribute to the FMN site; that span reads KG. Residues Lys-44 and 68-72 contribute to the substrate site; that span reads NSVGL. FMN is bound by residues Asn-98 and Asn-124. Asn-124 lines the substrate pocket. The active-site Nucleophile is Cys-127. Residues Lys-162 and Ile-188 each coordinate FMN. 189 to 190 provides a ligand contact to substrate; that stretch reads NT. Residues Gly-214, 240-241, and 262-263 each bind FMN; these read GG and GT.

The protein belongs to the dihydroorotate dehydrogenase family. Type 1 subfamily. Heterotetramer of 2 PyrK and 2 PyrD type B subunits. FMN serves as cofactor.

The protein resides in the cytoplasm. It catalyses the reaction (S)-dihydroorotate + NAD(+) = orotate + NADH + H(+). The protein operates within pyrimidine metabolism; UMP biosynthesis via de novo pathway; orotate from (S)-dihydroorotate (NAD(+) route): step 1/1. Catalyzes the conversion of dihydroorotate to orotate with NAD(+) as electron acceptor. The chain is Dihydroorotate dehydrogenase B (NAD(+)), catalytic subunit (pyrD) from Caldicellulosiruptor saccharolyticus (strain ATCC 43494 / DSM 8903 / Tp8T 6331).